The sequence spans 493 residues: Alpha-amylase-related protein (493 aa).

A signal peptide spans 1–19 (MFKFALTLTLCLAGSLSLA). Pyrrolidone carboxylic acid is present on Q20. C47 and C103 form a disulfide bridge. Ca(2+)-binding residues include N117, Q168, and D177. A disulfide bridge connects residues C156 and C170. R205 lines the chloride pocket. D207 acts as the Nucleophile in catalysis. H211 contributes to the Ca(2+) binding site. The active-site Proton donor is the E244. 2 residues coordinate chloride: N307 and R342. 3 cysteine pairs are disulfide-bonded: C375–C381, C417–C440, and C447–C459.

The protein belongs to the glycosyl hydrolase 13 family. In terms of assembly, monomer. The cofactor is Ca(2+). Requires chloride as cofactor.

It localises to the secreted. It catalyses the reaction Endohydrolysis of (1-&gt;4)-alpha-D-glucosidic linkages in polysaccharides containing three or more (1-&gt;4)-alpha-linked D-glucose units.. The protein is Alpha-amylase-related protein (Amyrel) of Drosophila simulans (Fruit fly).